Reading from the N-terminus, the 201-residue chain is Peptidyl-tRNA hydrolase (201 aa).

Residue Tyr17 participates in tRNA binding. His22 functions as the Proton acceptor in the catalytic mechanism. The tRNA site is built by Phe76, Asn78, and Asn124.

Belongs to the PTH family. Monomer.

It is found in the cytoplasm. The catalysed reaction is an N-acyl-L-alpha-aminoacyl-tRNA + H2O = an N-acyl-L-amino acid + a tRNA + H(+). In terms of biological role, hydrolyzes ribosome-free peptidyl-tRNAs (with 1 or more amino acids incorporated), which drop off the ribosome during protein synthesis, or as a result of ribosome stalling. Functionally, catalyzes the release of premature peptidyl moieties from peptidyl-tRNA molecules trapped in stalled 50S ribosomal subunits, and thus maintains levels of free tRNAs and 50S ribosomes. This is Peptidyl-tRNA hydrolase from Nitratidesulfovibrio vulgaris (strain ATCC 29579 / DSM 644 / CCUG 34227 / NCIMB 8303 / VKM B-1760 / Hildenborough) (Desulfovibrio vulgaris).